Reading from the N-terminus, the 588-residue chain is Probable G-protein coupled receptor 162 (588 aa).

Residues 1–17 (MARGGAGAEEASLRSNA) lie on the Extracellular side of the membrane. The helical transmembrane segment at 18-38 (LSWLACGLLALLANAWIILSI) threads the bilayer. At 39 to 49 (SAKQQKHKPLE) the chain is on the cytoplasmic side. The chain crosses the membrane as a helical span at residues 50–70 (LLLCFLAGTHILMAAVPLTTF). Over 71 to 91 (AVVQLRRQASSDYDWNESICK) the chain is Extracellular. Residue asparagine 86 is glycosylated (N-linked (GlcNAc...) asparagine). A helical membrane pass occupies residues 92–112 (VFVSTYYTLALATCFTVASLS). Residues 113–133 (YHRMWMVRWPVNYRLSNAKKQ) lie on the Cytoplasmic side of the membrane. The helical transmembrane segment at 134–154 (ALHAVMGIWMVSFILSTLPSI) threads the bilayer. Residues 155-174 (GWHNNGERYYARGCQFIVSK) are Extracellular-facing. A helical membrane pass occupies residues 175 to 195 (IGLGFGVCFSLLLLGGIVMGL). Over 196-275 (VCVAITFYQT…SLQVTNLVSA (80 aa)) the chain is Cytoplasmic. Residues 276-296 (IVFLYDSLTGVPILVVSFFSL) traverse the membrane as a helical segment. Residues 297–303 (KSDSAPP) are Extracellular-facing. The helical transmembrane segment at 304-324 (WMVLAVLWCSMAQTLLLPSFI) threads the bilayer. Residues 325–588 (WSCERYRADV…GNPIFPQLTL (264 aa)) lie on the Cytoplasmic side of the membrane. Serine 413 and serine 435 each carry phosphoserine. Disordered stretches follow at residues 445-474 (QSRALGGPPEYLGQRHRLEDEEDEEEAEGG) and 511-550 (ETPLPSPTASPGHSPRRPRPLGLSPRRLSLGSPESRAVGL). The segment covering 530–546 (PLGLSPRRLSLGSPESR) has biased composition (low complexity).

This sequence belongs to the G-protein coupled receptor 1 family.

The protein resides in the cell membrane. Orphan receptor. In Homo sapiens (Human), this protein is Probable G-protein coupled receptor 162 (GPR162).